A 1040-amino-acid chain; its full sequence is DNA cross-link repair 1A protein (1040 aa).

Residues M1 to P190 are nuclear localization region. Positions S15–V76 are disordered. The segment covering R53–V65 has biased composition (basic and acidic residues). Residues D119–P149 form a UBZ4-type zinc finger. Positions 122, 125, 140, and 144 each coordinate Zn(2+). Glycyl lysine isopeptide (Lys-Gly) (interchain with G-Cter in SUMO2) cross-links involve residues K202, K236, K269, K353, K361, K429, K488, K508, K517, K533, and K536. Positions L396–A614 are nuclear focus formation. 2 disordered regions span residues G582–K602 and S623–K651. S590 is modified (phosphoserine). Residues K668, K670, and K674 each participate in a glycyl lysine isopeptide (Lys-Gly) (interchain with G-Cter in SUMO2) cross-link.

The protein belongs to the DNA repair metallo-beta-lactamase (DRMBL) family. Binds constitutively to TP53BP1. Binds CDC27, which is itself a component of the anaphase promoting complex (APC). Binds PIAS1. Expressed in brain, heart, kidney, liver, pancreas, placenta and skeletal muscle.

It localises to the nucleus. It catalyses the reaction a beta-lactam + H2O = a substituted beta-amino acid. Beta-lactamase activity is inhibited by sulbactam. Its function is as follows. May be required for DNA interstrand cross-link repair. Also required for checkpoint mediated cell cycle arrest in early prophase in response to mitotic spindle poisons. Possesses beta-lactamase activity, catalyzing the hydrolysis of penicillin G and nitrocefin. Exhibits no activity towards other beta-lactam antibiotic classes including cephalosporins (cefotaxime) and carbapenems (imipenem). The protein is DNA cross-link repair 1A protein (DCLRE1A) of Homo sapiens (Human).